A 249-amino-acid polypeptide reads, in one-letter code: Ribonuclease 3 (249 aa).

The region spanning 20 to 149 (FKKFQERISV…FIGALYLDQG (130 aa)) is the RNase III domain. Glutamate 62 provides a ligand contact to Mg(2+). Aspartate 66 is an active-site residue. Mg(2+)-binding residues include aspartate 135 and glutamate 138. Glutamate 138 is a catalytic residue. A DRBM domain is found at 175–244 (DFKSQLQEFV…AQEALAKLQK (70 aa)). Residues 225–249 (RSKKEAEQHAAQEALAKLQKHHMKQ) form a disordered region.

It belongs to the ribonuclease III family. As to quaternary structure, homodimer. It depends on Mg(2+) as a cofactor.

It localises to the cytoplasm. The enzyme catalyses Endonucleolytic cleavage to 5'-phosphomonoester.. Digests double-stranded RNA. Involved in the processing of primary rRNA transcript to yield the immediate precursors to the large and small rRNAs (23S and 16S). Processes some mRNAs, and tRNAs when they are encoded in the rRNA operon. Processes pre-crRNA and tracrRNA of type II CRISPR loci if present in the organism. The polypeptide is Ribonuclease 3 (Bacillus licheniformis (strain ATCC 14580 / DSM 13 / JCM 2505 / CCUG 7422 / NBRC 12200 / NCIMB 9375 / NCTC 10341 / NRRL NRS-1264 / Gibson 46)).